Consider the following 218-residue polypeptide: Small ribosomal subunit protein uS3c (218 aa).

Residues 47–118 (VQKHMRISSG…RLNIAIARVA (72 aa)) enclose the KH type-2 domain.

The protein belongs to the universal ribosomal protein uS3 family. Part of the 30S ribosomal subunit.

The protein resides in the plastid. Its subcellular location is the chloroplast. This is Small ribosomal subunit protein uS3c (rps3) from Nymphaea alba (White water-lily).